The sequence spans 196 residues: Metalloproteinase inhibitor 2 (196 aa).

The first 2 residues, 1-2 (RA), serve as a signal peptide directing secretion. Zn(2+) is bound at residue C3. Involved in metalloproteinase-binding regions lie at residues 3 to 6 (CSCS) and 71 to 72 (SA). Disulfide bonds link C3–C74, C5–C103, C15–C128, C130–C177, C135–C140, and C148–C169. In terms of domain architecture, NTR spans 3 to 128 (CSCSPVHPQQ…SLNHRYQMGC (126 aa)).

Belongs to the protease inhibitor I35 (TIMP) family. As to quaternary structure, interacts (via the C-terminal) with MMP2 (via the C-terminal PEX domain); the interaction inhibits the MMP2 activity. In terms of processing, the activity of TIMP2 is dependent on the presence of disulfide bonds.

Its subcellular location is the secreted. Its function is as follows. Complexes with metalloproteinases (such as collagenases) and irreversibly inactivates them by binding to their catalytic zinc cofactor. In Cricetulus longicaudatus (Long-tailed dwarf hamster), this protein is Metalloproteinase inhibitor 2 (TIMP2).